Reading from the N-terminus, the 160-residue chain is MTKKKAHKPGSATIALNKRARHEYFIEEEFEAGLALQGWEVKSLRAGKANIGDSYVILKDGEAYLFGANFQPLNVASTHVVCDPTRTRKLLLNQRELDNLYGRINRDGYTVVALSLYWKNAWCKVKIGVAKGKKQHDKRSDLKEREWQLDKARIMKNAGR.

The protein belongs to the SmpB family.

It is found in the cytoplasm. In terms of biological role, required for rescue of stalled ribosomes mediated by trans-translation. Binds to transfer-messenger RNA (tmRNA), required for stable association of tmRNA with ribosomes. tmRNA and SmpB together mimic tRNA shape, replacing the anticodon stem-loop with SmpB. tmRNA is encoded by the ssrA gene; the 2 termini fold to resemble tRNA(Ala) and it encodes a 'tag peptide', a short internal open reading frame. During trans-translation Ala-aminoacylated tmRNA acts like a tRNA, entering the A-site of stalled ribosomes, displacing the stalled mRNA. The ribosome then switches to translate the ORF on the tmRNA; the nascent peptide is terminated with the 'tag peptide' encoded by the tmRNA and targeted for degradation. The ribosome is freed to recommence translation, which seems to be the essential function of trans-translation. The sequence is that of SsrA-binding protein from Cronobacter sakazakii (strain ATCC BAA-894) (Enterobacter sakazakii).